Here is a 908-residue protein sequence, read N- to C-terminus: Translation initiation factor IF-2 (908 aa).

The disordered stretch occupies residues 52 to 318 (QSHGQEEKRR…RSSQSSQHKF (267 aa)). Over residues 65-84 (KSKTTSTARVTGSSGKSKSV) the composition is skewed to polar residues. 6 stretches are compositionally biased toward basic and acidic residues: residues 94–108 (FEKPDPEKMAEELAA), 120–138 (AAKDAEDRAATKKKSEERQ), 176–185 (IEVKPKDQPK), 193–238 (PKVE…EQMR), 270–280 (SFEKERREIKR), and 294–303 (KNQDEREIKN). A tr-type G domain is found at 409–578 (TRPPVVTIMG…SLQAELMELE (170 aa)). The tract at residues 418–425 (GHVDHGKT) is G1. Residue 418-425 (GHVDHGKT) coordinates GTP. The tract at residues 443–447 (GITQH) is G2. Positions 464–467 (DTPG) are G3. Residues 464 to 468 (DTPGH) and 518 to 521 (NKMD) contribute to the GTP site. The interval 518–521 (NKMD) is G4. The interval 554–556 (SAK) is G5.

The protein belongs to the TRAFAC class translation factor GTPase superfamily. Classic translation factor GTPase family. IF-2 subfamily.

It localises to the cytoplasm. In terms of biological role, one of the essential components for the initiation of protein synthesis. Protects formylmethionyl-tRNA from spontaneous hydrolysis and promotes its binding to the 30S ribosomal subunits. Also involved in the hydrolysis of GTP during the formation of the 70S ribosomal complex. This Psychrobacter cryohalolentis (strain ATCC BAA-1226 / DSM 17306 / VKM B-2378 / K5) protein is Translation initiation factor IF-2.